The following is a 319-amino-acid chain: Beta-ketoacyl-[acyl-carrier-protein] synthase III (319 aa).

Residues C113 and H246 contribute to the active site. The tract at residues Q247 to R251 is ACP-binding. N276 is an active-site residue.

This sequence belongs to the thiolase-like superfamily. FabH family. As to quaternary structure, homodimer.

The protein localises to the cytoplasm. It carries out the reaction malonyl-[ACP] + acetyl-CoA + H(+) = 3-oxobutanoyl-[ACP] + CO2 + CoA. It participates in lipid metabolism; fatty acid biosynthesis. Catalyzes the condensation reaction of fatty acid synthesis by the addition to an acyl acceptor of two carbons from malonyl-ACP. Catalyzes the first condensation reaction which initiates fatty acid synthesis and may therefore play a role in governing the total rate of fatty acid production. Possesses both acetoacetyl-ACP synthase and acetyl transacylase activities. Its substrate specificity determines the biosynthesis of branched-chain and/or straight-chain of fatty acids. The sequence is that of Beta-ketoacyl-[acyl-carrier-protein] synthase III from Ehrlichia ruminantium (strain Welgevonden).